Here is a 294-residue protein sequence, read N- to C-terminus: N-acetylmuramic acid 6-phosphate etherase (294 aa).

Positions 54–217 (VIQSFEEEGR…STASMIGVGK (164 aa)) constitute an SIS domain. Residue glutamate 82 is the Proton donor of the active site. Glutamate 113 is an active-site residue.

It belongs to the GCKR-like family. MurNAc-6-P etherase subfamily. Homodimer.

It carries out the reaction N-acetyl-D-muramate 6-phosphate + H2O = N-acetyl-D-glucosamine 6-phosphate + (R)-lactate. It functions in the pathway amino-sugar metabolism; N-acetylmuramate degradation. Its function is as follows. Specifically catalyzes the cleavage of the D-lactyl ether substituent of MurNAc 6-phosphate, producing GlcNAc 6-phosphate and D-lactate. The sequence is that of N-acetylmuramic acid 6-phosphate etherase from Bacillus cereus (strain AH820).